The sequence spans 669 residues: Zinc finger MYM-type protein 5 (669 aa).

Glycyl lysine isopeptide (Lys-Gly) (interchain with G-Cter in SUMO2) cross-links involve residues Lys-88, Lys-91, Lys-134, Lys-149, Lys-166, and Lys-225. MYM-type zinc fingers lie at residues 265-299 (HLFCSTTCLSSFSHKRTQNTRSIICKKDASTKKAN), 311-351 (QEFY…RHEV), 358-393 (HKLCSNHCFNKYRLANGLIMNCCEHCGEYMPSKSTG), and 404-431 (KRFCCQSCINEYKQMMETKSKKLTASEN). Residues Lys-443, Lys-455, Lys-462, and Lys-552 each participate in a glycyl lysine isopeptide (Lys-Gly) (interchain with G-Cter in SUMO2) cross-link.

As to quaternary structure, interacts (via N-terminal 120 amino acid region) with ETV5 (via C-terminal).

Its subcellular location is the nucleus. Functions as a transcriptional regulator. The polypeptide is Zinc finger MYM-type protein 5 (ZMYM5) (Homo sapiens (Human)).